The chain runs to 524 residues: ORC1-type DNA replication protein 4 (524 aa).

The segment covering Met1–Ala23 has biased composition (polar residues). A disordered region spans residues Met1–Gly67. ATP contacts are provided by residues Thr128–Ala132, Tyr325, and Arg337.

Belongs to the CDC6/cdc18 family.

Functionally, involved in regulation of DNA replication. This is ORC1-type DNA replication protein 4 (cdc6d) from Haloarcula marismortui (strain ATCC 43049 / DSM 3752 / JCM 8966 / VKM B-1809) (Halobacterium marismortui).